The primary structure comprises 776 residues: DNA ligase (776 aa).

Residues 31–35 (DAEYD), 80–81 (SL), and Glu112 contribute to the NAD(+) site. The active-site N6-AMP-lysine intermediate is the Lys114. Residues Arg135, Glu172, Lys288, and Lys312 each coordinate NAD(+). Zn(2+)-binding residues include Cys406, Cys409, Cys436, and Cys442. Residues 693–776 (AEGLPLAGQT…TFLAEQGIAV (84 aa)) enclose the BRCT domain.

Belongs to the NAD-dependent DNA ligase family. LigA subfamily. Mg(2+) serves as cofactor. Requires Mn(2+) as cofactor.

It catalyses the reaction NAD(+) + (deoxyribonucleotide)n-3'-hydroxyl + 5'-phospho-(deoxyribonucleotide)m = (deoxyribonucleotide)n+m + AMP + beta-nicotinamide D-nucleotide.. DNA ligase that catalyzes the formation of phosphodiester linkages between 5'-phosphoryl and 3'-hydroxyl groups in double-stranded DNA using NAD as a coenzyme and as the energy source for the reaction. It is essential for DNA replication and repair of damaged DNA. This chain is DNA ligase, found in Pseudomonas putida (strain ATCC 47054 / DSM 6125 / CFBP 8728 / NCIMB 11950 / KT2440).